A 212-amino-acid polypeptide reads, in one-letter code: Protein-L-isoaspartate O-methyltransferase (212 aa).

The active site involves Ser61.

It belongs to the methyltransferase superfamily. L-isoaspartyl/D-aspartyl protein methyltransferase family.

It is found in the cytoplasm. It carries out the reaction [protein]-L-isoaspartate + S-adenosyl-L-methionine = [protein]-L-isoaspartate alpha-methyl ester + S-adenosyl-L-homocysteine. Functionally, catalyzes the methyl esterification of L-isoaspartyl residues in peptides and proteins that result from spontaneous decomposition of normal L-aspartyl and L-asparaginyl residues. It plays a role in the repair and/or degradation of damaged proteins. This is Protein-L-isoaspartate O-methyltransferase from Pseudoalteromonas atlantica (strain T6c / ATCC BAA-1087).